The following is a 111-amino-acid chain: Large ribosomal subunit protein uL29 (111 aa).

The large ribosomal subunit protein uL29 stretch occupies residues 1 to 85 (MTVAKELRQK…TKKTNEAAVN (85 aa)). Residues 86–111 (AWKQHLEANKAKLLKSRAKREDASKK) form a unknown region.

Belongs to the universal ribosomal protein uL29 family.

The sequence is that of Large ribosomal subunit protein uL29 from Mycoplasma pneumoniae (strain ATCC 29342 / M129 / Subtype 1) (Mycoplasmoides pneumoniae).